The sequence spans 103 residues: NAD(P)H-quinone oxidoreductase subunit 4L, organellar chromatophore (103 aa).

The next 3 membrane-spanning stretches (helical) occupy residues 3-23 (IMLE…VWGL), 32-52 (VLMS…AFSN), and 63-83 (VFAI…LAIL).

This sequence belongs to the complex I subunit 4L family. NDH is composed of at least 16 different subunits, 5 of which are encoded in the nucleus.

It localises to the plastid. It is found in the organellar chromatophore thylakoid membrane. It carries out the reaction a plastoquinone + NADH + (n+1) H(+)(in) = a plastoquinol + NAD(+) + n H(+)(out). The catalysed reaction is a plastoquinone + NADPH + (n+1) H(+)(in) = a plastoquinol + NADP(+) + n H(+)(out). Functionally, NDH shuttles electrons from NAD(P)H:plastoquinone, via FMN and iron-sulfur (Fe-S) centers, to quinones in the photosynthetic chain and possibly in a chloroplast respiratory chain. The immediate electron acceptor for the enzyme in this species is believed to be plastoquinone. Couples the redox reaction to proton translocation, and thus conserves the redox energy in a proton gradient. The sequence is that of NAD(P)H-quinone oxidoreductase subunit 4L, organellar chromatophore from Paulinella chromatophora.